A 206-amino-acid polypeptide reads, in one-letter code: Photosynthetic reaction center cytochrome c-551 (206 aa).

Helical transmembrane passes span Ile-10–Leu-30, Phe-49–Met-69, and Lys-76–Leu-96. Positions 152, 155, 156, and 182 each coordinate heme.

In terms of assembly, component of the photosynthetic reaction center. The reaction center interacts with the Fenna-Matthews-Olson (FMO, fmoA) complex. Post-translationally, binds 1 heme group per subunit.

It localises to the cell inner membrane. Functionally, monoheme cytochrome which is the immediate electron donor to P840 of the photosynthetic reaction center complex. This Chlorobaculum parvum (strain DSM 263 / NCIMB 8327) (Chlorobium vibrioforme subsp. thiosulfatophilum) protein is Photosynthetic reaction center cytochrome c-551 (pscC).